The following is a 73-amino-acid chain: Conotoxin Leo-O2 (73 aa).

Positions 1-22 (MKLTCVLIIAVLFLTACQLVTA) are cleaved as a signal peptide. Residues 23 to 47 (DYSGDEQQYRAMRLIDAMRNFGDTR) constitute a propeptide that is removed on maturation. 3 cysteine pairs are disulfide-bonded: Cys49–Cys59, Cys56–Cys64, and Cys58–Cys69.

It belongs to the conotoxin O1 superfamily. Expressed by the venom duct.

The protein localises to the secreted. The sequence is that of Conotoxin Leo-O2 from Conus leopardus (Leopard cone).